We begin with the raw amino-acid sequence, 373 residues long: Probable G-protein coupled receptor 173 (373 aa).

Topologically, residues 1–26 (MANTTGEPEEVSGALSPPSASAYVKL) are extracellular. Residue N3 is glycosylated (N-linked (GlcNAc...) asparagine). The chain crosses the membrane as a helical span at residues 27 to 47 (VLLGLIMCVSLAGNAILSLLV). Residues 48-59 (LKERALHKAPYY) lie on the Cytoplasmic side of the membrane. A helical transmembrane segment spans residues 60–80 (FLLDLCLADGIRSAVCFPFVL). At 81 to 97 (ASVRHGSSWTFSALSCK) the chain is on the extracellular side. Cysteines 96 and 174 form a disulfide. Residues 98 to 118 (IVAFMAVLFCFHAAFMLFCIS) traverse the membrane as a helical segment. Topologically, residues 119–139 (VTRYMAIAHHRFYAKRMTLWT) are cytoplasmic. Residues 140–160 (CAAVICMAWTLSVAMAFPPVF) traverse the membrane as a helical segment. The Extracellular segment spans residues 161-188 (DVGTYKFIREEDQCIFEHRYFKANDTLG). A glycan (N-linked (GlcNAc...) asparagine) is linked at N184. Residues 189–209 (FMLMLAVLMAATHAVYGKLLL) form a helical membrane-spanning segment. The Cytoplasmic portion of the chain corresponds to 210–287 (FEYRHRKMKP…VKGEKQLGRM (78 aa)). The chain crosses the membrane as a helical span at residues 288 to 308 (FYAITLLFLLLWSPYIVACYW). Over 309 to 322 (RVFVKACAVPHRYL) the chain is Extracellular. A helical transmembrane segment spans residues 323-343 (ATAVWMSFAQAAVNPIVCFLL). Over 344–373 (NKDLKKCLRTHAPCWGTGGAPAPREPYCVM) the chain is Cytoplasmic.

This sequence belongs to the G-protein coupled receptor 1 family. As to expression, expressed in the ovary, specifically in granulosa cells of follicles that have passed the primary stage and in oocytes (at protein level). Expressed at high levels in brain. Lower levels in small intestine. In brain regions, detected in all regions tested. Highest levels in the cerebellum and cerebral cortex.

It is found in the cell membrane. Is a receptor for the SMIM20 derived peptides Phoenixin-14 and Phoenixin-20. It mediates the Phoenixin-14 and Phoenixin-20 augmentation of gonadotropin-releasing hormone (GNRH) signaling in the hypothalamus and pituitary gland. In the ovary, it mediates the effects of Phoenixin-14 and Phoenixin-20 induced granulosa cell proliferation during follicular growth. In Homo sapiens (Human), this protein is Probable G-protein coupled receptor 173 (GPR173).